We begin with the raw amino-acid sequence, 226 residues long: Triosephosphate isomerase (226 aa).

12 to 14 (NFK) is a binding site for substrate. His-96 serves as the catalytic Electrophile. The active-site Proton acceptor is Glu-144. Substrate contacts are provided by residues Ile-149, Gly-184, and 205 to 206 (AS).

It belongs to the triosephosphate isomerase family. In terms of assembly, homotetramer; dimer of dimers.

It localises to the cytoplasm. The enzyme catalyses D-glyceraldehyde 3-phosphate = dihydroxyacetone phosphate. Its pathway is carbohydrate biosynthesis; gluconeogenesis. It functions in the pathway carbohydrate degradation; glycolysis; D-glyceraldehyde 3-phosphate from glycerone phosphate: step 1/1. In terms of biological role, involved in the gluconeogenesis. Catalyzes stereospecifically the conversion of dihydroxyacetone phosphate (DHAP) to D-glyceraldehyde-3-phosphate (G3P). This is Triosephosphate isomerase from Thermococcus kodakarensis (strain ATCC BAA-918 / JCM 12380 / KOD1) (Pyrococcus kodakaraensis (strain KOD1)).